A 146-amino-acid polypeptide reads, in one-letter code: uncharacterized protein (146 aa).

The N-acetyltransferase domain occupies 7–146; it reads LQINYKTDEL…EGHDILIWNP (140 aa).

This is an uncharacterized protein from Staphylococcus epidermidis (strain ATCC 35984 / DSM 28319 / BCRC 17069 / CCUG 31568 / BM 3577 / RP62A).